The primary structure comprises 176 residues: ATP-dependent protease subunit HslV (176 aa).

The active site involves T2. Na(+)-binding residues include A157, C160, and T163.

The protein belongs to the peptidase T1B family. HslV subfamily. In terms of assembly, a double ring-shaped homohexamer of HslV is capped on each side by a ring-shaped HslU homohexamer. The assembly of the HslU/HslV complex is dependent on binding of ATP.

It localises to the cytoplasm. The enzyme catalyses ATP-dependent cleavage of peptide bonds with broad specificity.. Its activity is regulated as follows. Allosterically activated by HslU binding. Protease subunit of a proteasome-like degradation complex believed to be a general protein degrading machinery. The polypeptide is ATP-dependent protease subunit HslV (Buchnera aphidicola subsp. Acyrthosiphon pisum (strain APS) (Acyrthosiphon pisum symbiotic bacterium)).